Consider the following 420-residue polypeptide: MSAFTDLETLAGDLKRSSAGVSDYHDRAVTPAQTFAAIRPHLRDFGITRVGLLTALDVLNIPVAFATRPNSHTLSVFQGKGIDNEAAMTSAAMEAVETRIAEIAPADLTQATVESMRAERAAMIDLDNVARCAPDEIGSRPIPWCSGLDILSGSSVFVPWWLVGLDHRGERPPGFEQSSDGLASGNTPSEAVLHGLCELVERDAWALTQLKSPERLKESRIDPASFGDAVIDVMTDRITRAGMKLLLLDMTTDIGIPAFLAVIMPGNLSDRVDARWSHVCGGCGCHPDPVRAALRAITEAAQSRLTAIAGSRDDFSPRIYQRLDRSAAMQQVVELCEGDGRMRPFQPRHHRKATIQETIGHIADRLVATGIEQIVVVPFPHPALPVSVVRVIVPGLEVDISGQYIQLGMRAVNTIRGAES.

Positions 79 to 420 (GKGIDNEAAM…AVNTIRGAES (342 aa)) constitute a YcaO domain.

This is an uncharacterized protein from Rhizobium leguminosarum bv. trifolii.